Reading from the N-terminus, the 396-residue chain is Queuine tRNA-ribosyltransferase catalytic subunit 1 (396 aa).

D99 (proton acceptor) is an active-site residue. Queuine contacts are provided by residues 99 to 103, D153, Q196, and G223; that span reads DSGGF. Residues 254-260 are RNA binding; the sequence is GVGYATD. D273 functions as the Nucleophile in the catalytic mechanism. Residues 278-282 are RNA binding; important for wobble base 34 recognition; it reads TRTAR. Residues C311, C313, C316, and H341 each coordinate Zn(2+).

This sequence belongs to the queuine tRNA-ribosyltransferase family. As to quaternary structure, heterodimer of a catalytic subunit qtrt1 and an accessory subunit qtrt2. It depends on Zn(2+) as a cofactor.

Its subcellular location is the cytoplasm. It localises to the mitochondrion outer membrane. The enzyme catalyses guanosine(34) in tRNA + queuine = queuosine(34) in tRNA + guanine. Catalytic subunit of the queuine tRNA-ribosyltransferase (TGT) that catalyzes the base-exchange of a guanine (G) residue with queuine (Q) at position 34 (anticodon wobble position) in tRNAs with GU(N) anticodons (tRNA-Asp, -Asn, -His and -Tyr), resulting in the hypermodified nucleoside queuosine (7-(((4,5-cis-dihydroxy-2-cyclopenten-1-yl)amino)methyl)-7-deazaguanosine). Catalysis occurs through a double-displacement mechanism. The nucleophile active site attacks the C1' of nucleotide 34 to detach the guanine base from the RNA, forming a covalent enzyme-RNA intermediate. The proton acceptor active site deprotonates the incoming queuine, allowing a nucleophilic attack on the C1' of the ribose to form the product. In Xenopus laevis (African clawed frog), this protein is Queuine tRNA-ribosyltransferase catalytic subunit 1.